Reading from the N-terminus, the 419-residue chain is CDP-diacylglycerol--serine O-phosphatidyltransferase 3 (419 aa).

Residues 1–51 are disordered; that stretch reads MPVRRRWYPPSSTAAQPSPDGGDVNTDDADACPSSRQQRPPSLPQHSAPIH. Low complexity predominate over residues 33–47; sequence PSSRQQRPPSLPQHS. The next 7 helical transmembrane spans lie at 103–123, 142–162, 168–188, 260–280, 287–307, 359–379, and 384–404; these read PHTV…SGVL, WAMI…TILI, VWRL…FLLF, LLLW…RHML, WWDS…WAGM, FIQV…TFFL, and WIPP…LIAI.

It belongs to the CDP-alcohol phosphatidyltransferase class-I family.

The protein localises to the endoplasmic reticulum membrane. It catalyses the reaction a CDP-1,2-diacyl-sn-glycerol + L-serine = a 1,2-diacyl-sn-glycero-3-phospho-L-serine + CMP + H(+). The protein operates within phospholipid metabolism; phosphatidylethanolamine biosynthesis; phosphatidylethanolamine from CDP-diacylglycerol: step 1/2. In terms of biological role, catalyzes a base-exchange reaction in which the polar head group of phosphatidylethanolamine (PE) or phosphatidylcholine (PC) is replaced by L-serine. This Oryza sativa subsp. japonica (Rice) protein is CDP-diacylglycerol--serine O-phosphatidyltransferase 3 (PSS3).